The chain runs to 239 residues: Phosphoribosylaminoimidazole-succinocarboxamide synthase (239 aa).

It belongs to the SAICAR synthetase family.

The enzyme catalyses 5-amino-1-(5-phospho-D-ribosyl)imidazole-4-carboxylate + L-aspartate + ATP = (2S)-2-[5-amino-1-(5-phospho-beta-D-ribosyl)imidazole-4-carboxamido]succinate + ADP + phosphate + 2 H(+). Its pathway is purine metabolism; IMP biosynthesis via de novo pathway; 5-amino-1-(5-phospho-D-ribosyl)imidazole-4-carboxamide from 5-amino-1-(5-phospho-D-ribosyl)imidazole-4-carboxylate: step 1/2. This is Phosphoribosylaminoimidazole-succinocarboxamide synthase from Brevibacillus brevis (strain 47 / JCM 6285 / NBRC 100599).